Consider the following 198-residue polypeptide: Probable nicotinate-nucleotide adenylyltransferase (198 aa).

Belongs to the NadD family.

The catalysed reaction is nicotinate beta-D-ribonucleotide + ATP + H(+) = deamido-NAD(+) + diphosphate. It functions in the pathway cofactor biosynthesis; NAD(+) biosynthesis; deamido-NAD(+) from nicotinate D-ribonucleotide: step 1/1. Functionally, catalyzes the reversible adenylation of nicotinate mononucleotide (NaMN) to nicotinic acid adenine dinucleotide (NaAD). The chain is Probable nicotinate-nucleotide adenylyltransferase from Herpetosiphon aurantiacus (strain ATCC 23779 / DSM 785 / 114-95).